The primary structure comprises 153 residues: Probable Brix domain-containing ribosomal biogenesis protein (153 aa).

Residues methionine 1–arginine 153 enclose the Brix domain.

Its function is as follows. Probably involved in the biogenesis of the ribosome. The protein is Probable Brix domain-containing ribosomal biogenesis protein of Archaeoglobus fulgidus (strain ATCC 49558 / DSM 4304 / JCM 9628 / NBRC 100126 / VC-16).